A 277-amino-acid polypeptide reads, in one-letter code: Energy-coupling factor transporter ATP-binding protein EcfA1 (277 aa).

One can recognise an ABC transporter domain in the interval 5-240 (LEVENLVFKY…SEDMVEIGLD (236 aa)). ATP is bound at residue 40 to 47 (GQNGSGKS).

It belongs to the ABC transporter superfamily. Energy-coupling factor EcfA family. Forms a stable energy-coupling factor (ECF) transporter complex composed of 2 membrane-embedded substrate-binding proteins (S component), 2 ATP-binding proteins (A component) and 2 transmembrane proteins (T component).

The protein localises to the cell membrane. Its function is as follows. ATP-binding (A) component of a common energy-coupling factor (ECF) ABC-transporter complex. Unlike classic ABC transporters this ECF transporter provides the energy necessary to transport a number of different substrates. This Lactococcus lactis subsp. lactis (strain IL1403) (Streptococcus lactis) protein is Energy-coupling factor transporter ATP-binding protein EcfA1.